Reading from the N-terminus, the 143-residue chain is Hemoglobin subunit alpha (143 aa).

The 142-residue stretch at 2–143 (SLTARDKSVV…LSAALADKYR (142 aa)) folds into the Globin domain. H60 is an O2 binding site. H89 serves as a coordination point for heme b.

The protein belongs to the globin family. In terms of assembly, heterotetramer of two alpha chains and two beta chains. Red blood cells.

Functionally, involved in oxygen transport from gills to the various peripheral tissues. This Salmo salar (Atlantic salmon) protein is Hemoglobin subunit alpha (hba).